Consider the following 598-residue polypeptide: Cytochrome P450 monooxygenase phmB (598 aa).

Residues 107-127 (VAAKIAALLFVAGLFWAVSVL) traverse the membrane as a helical segment. Asn171, Asn428, and Asn494 each carry an N-linked (GlcNAc...) asparagine glycan. Cys542 is a heme binding site. Asn549 and Asn581 each carry an N-linked (GlcNAc...) asparagine glycan.

This sequence belongs to the cytochrome P450 family. Requires heme as cofactor.

It localises to the membrane. It functions in the pathway mycotoxin biosynthesis. Its function is as follows. Cytochrome P450 monooxygenase; part of the gene cluster that mediates the biosynthesis of the mycotoxins phomacins, leucine-derived cytochalasans with potent actin polymerization-inhibitory activities and monocot-specific antigerminative activities. The first step in the pathway is catalyzed by the hybrid PKS-NRPS phmA, assisted by the enoyl reductase phmE, that are responsible for fusion of the leucine precursor and the polyketide backbone to produce a 2-pyrrolidone intermediate. The polyketide synthase module (PKS) of phmA is responsible for the synthesis of the polyketide backbone and the downstream nonribosomal peptide synthetase (NRPS) amidates the carboxyl end of the polyketide with the leucine precursor. Because phmA lacks a designated enoylreductase (ER) domain, the required activity is provided the enoyl reductase phmE. Reduction by the hydrolyase phmG, followed by dehydration and intra-molecular Diels-Alder cyclization by the Diels-Alderase phmD then yield the required isoindolone-fused macrocycle. A number of oxidative steps catalyzed by the tailoring cytochrome P450 monooxygenase phmB, the FAD-linked oxidoreductase phmC and the short-chain dehydrogenase/reductase phmF, are further required to afford the final products, phomacin D and phomacin E. In Phaeosphaeria nodorum (strain SN15 / ATCC MYA-4574 / FGSC 10173) (Glume blotch fungus), this protein is Cytochrome P450 monooxygenase phmB.